The primary structure comprises 150 residues: Arginine repressor (150 aa).

The protein belongs to the ArgR family.

Its subcellular location is the cytoplasm. Its pathway is amino-acid biosynthesis; L-arginine biosynthesis [regulation]. Functionally, regulates arginine biosynthesis genes. This is Arginine repressor from Finegoldia magna (strain ATCC 29328 / DSM 20472 / WAL 2508) (Peptostreptococcus magnus).